The primary structure comprises 111 residues: Large ribosomal subunit protein uL22 (111 aa).

The protein belongs to the universal ribosomal protein uL22 family. In terms of assembly, part of the 50S ribosomal subunit.

In terms of biological role, this protein binds specifically to 23S rRNA; its binding is stimulated by other ribosomal proteins, e.g. L4, L17, and L20. It is important during the early stages of 50S assembly. It makes multiple contacts with different domains of the 23S rRNA in the assembled 50S subunit and ribosome. The globular domain of the protein is located near the polypeptide exit tunnel on the outside of the subunit, while an extended beta-hairpin is found that lines the wall of the exit tunnel in the center of the 70S ribosome. The protein is Large ribosomal subunit protein uL22 of Clostridioides difficile (strain 630) (Peptoclostridium difficile).